A 136-amino-acid polypeptide reads, in one-letter code: ATP synthase epsilon chain (136 aa).

Residues 106–136 (MEGQPSSPEKLKAQQQLNEARARLQASKTAD) form a disordered region.

It belongs to the ATPase epsilon chain family. In terms of assembly, F-type ATPases have 2 components, CF(1) - the catalytic core - and CF(0) - the membrane proton channel. CF(1) has five subunits: alpha(3), beta(3), gamma(1), delta(1), epsilon(1). CF(0) has three main subunits: a, b and c.

It is found in the cellular thylakoid membrane. In terms of biological role, produces ATP from ADP in the presence of a proton gradient across the membrane. The sequence is that of ATP synthase epsilon chain from Synechococcus sp. (strain CC9605).